Here is a 277-residue protein sequence, read N- to C-terminus: Nudix hydrolase 10 (277 aa).

In terms of domain architecture, Nudix hydrolase spans 97-235 (WIPEAESTIP…KNDLFKDIHH (139 aa)). The Nudix box signature appears at 142–163 (GVVDEGEEIFAAAIREVKEETG). Mg(2+) is bound by residues Glu-157 and Glu-161.

This sequence belongs to the Nudix hydrolase family. Requires Mg(2+) as cofactor. The cofactor is Mn(2+). Expressed in roots, stems and, at lower level, leaves.

The enzyme catalyses ADP-D-ribose + H2O = D-ribose 5-phosphate + AMP + 2 H(+). It catalyses the reaction NAD(+) + H2O = beta-nicotinamide D-ribonucleotide + AMP + 2 H(+). It carries out the reaction NADH + H2O = reduced beta-nicotinamide D-ribonucleotide + AMP + 2 H(+). May mediate the hydrolysis of some nucleoside diphosphate derivatives. In vitro, uses both ADP-ribose and NADH as substrates; however the relevance of such substrates in vivo is unclear. In Arabidopsis thaliana (Mouse-ear cress), this protein is Nudix hydrolase 10 (NUDT10).